The following is a 154-amino-acid chain: Nascent polypeptide-associated complex subunit beta (154 aa).

The region spanning 34–99 is the NAC-A/B domain; sequence EQDDTKLIEA…PQEKDVTQLI (66 aa). A disordered region spans residues 125 to 154; the sequence is KNPELNAGGAEGAEEDIPDLIEGQKFDDVE.

This sequence belongs to the NAC-beta family. In terms of assembly, part of the nascent polypeptide-associated complex (NAC), consisting of EGD2 and EGD1. NAC associates with ribosomes via EGD1.

Its subcellular location is the cytoplasm. The protein localises to the nucleus. Functionally, component of the nascent polypeptide-associated complex (NAC), a dynamic component of the ribosomal exit tunnel, protecting the emerging polypeptides from interaction with other cytoplasmic proteins to ensure appropriate nascent protein targeting. The NAC complex also promotes mitochondrial protein import by enhancing productive ribosome interactions with the outer mitochondrial membrane and blocks the inappropriate interaction of ribosomes translating non-secretory nascent polypeptides with translocation sites in the membrane of the endoplasmic reticulum. EGD1 may act as a transcription factor that exert a negative effect on the expression of several genes that are transcribed by RNA polymerase II. The polypeptide is Nascent polypeptide-associated complex subunit beta (EGD1) (Debaryomyces hansenii (strain ATCC 36239 / CBS 767 / BCRC 21394 / JCM 1990 / NBRC 0083 / IGC 2968) (Yeast)).